We begin with the raw amino-acid sequence, 178 residues long: CCHC-type zinc finger nucleic acid binding protein (178 aa).

At Ser-2 the chain carries N-acetylserine. The CCHC-type 1 zinc finger occupies Asn-4–Thr-21. Lys-8 carries the N6-acetyllysine modification. An omega-N-methylarginine; by PRMT1 mark is found at Arg-25 and Arg-27. The interval Arg-25–Thr-38 is RNA-binding Arg/Gly-rich region (RGG-box). Arg-32 and Arg-34 each carry omega-N-methylarginine. A Phosphoserine modification is found at Ser-49. CCHC-type zinc fingers lie at residues Asp-52–Leu-69, Asp-72–Glu-90, Gln-97–His-114, Gln-118–Lys-135, Val-136–Lys-153, and Val-157–Ile-174. Omega-N-methylarginine occurs at positions 72, 79, and 80.

As to quaternary structure, associates with the 40S ribosomal subunit, the 80S ribosome and with polysomes. In terms of processing, arginine methylation by PRMT1 in the Arg/Gly-rich region impedes RNA binding.

Its subcellular location is the nucleus. The protein localises to the cytoplasm. It localises to the endoplasmic reticulum. Its function is as follows. Single-stranded DNA-binding protein that preferentially binds to the sterol regulatory element (SRE) sequence 5'-GTGCGGTG-3', and thereby mediates transcriptional repression. Has a role as transactivator of the Myc promoter. Binds single-stranded RNA in a sequence-specific manner. Binds G-rich elements in target mRNA coding sequences. Prevents G-quadruplex structure formation in vitro, suggesting a role in supporting translation by resolving stable structures on mRNAs. The polypeptide is CCHC-type zinc finger nucleic acid binding protein (Mus musculus (Mouse)).